The primary structure comprises 823 residues: Ankyrin repeat domain-containing protein 20B (823 aa).

6 ANK repeats span residues 32–65 (SELQ…ARDK), 66–95 (QHRT…QIDI), 99–128 (ENRT…NPNL), 132–161 (YGNT…HIEA), 165–194 (DSNT…STHA), and 198–227 (LRRS…DVFA). 2 disordered regions span residues 302 to 343 (PEKV…GVED) and 355 to 401 (VQTL…QLSE). Positions 372 to 382 (QERHERSEKKQ) are enriched in basic and acidic residues. 3 coiled-coil regions span residues 431-480 (KKLK…KQLE), 565-724 (EMIT…NNST), and 776-805 (LVLE…EKAE).

The sequence is that of Ankyrin repeat domain-containing protein 20B (ANKRD20A8P) from Homo sapiens (Human).